The chain runs to 639 residues: Chaperone protein DnaK (639 aa).

At T197 the chain carries Phosphothreonine; by autocatalysis. The interval 600-639 (SGAQGGAQAGPDMNAGQSNAGQNNGKQDDNVQDADFEEVK) is disordered. Residues 613–624 (NAGQSNAGQNNG) are compositionally biased toward low complexity. Positions 629 to 639 (NVQDADFEEVK) are enriched in acidic residues.

It belongs to the heat shock protein 70 family.

Functionally, acts as a chaperone. The polypeptide is Chaperone protein DnaK (Bacteroides fragilis (strain ATCC 25285 / DSM 2151 / CCUG 4856 / JCM 11019 / LMG 10263 / NCTC 9343 / Onslow / VPI 2553 / EN-2)).